A 511-amino-acid polypeptide reads, in one-letter code: 2-isopropylmalate synthase (511 aa).

The Pyruvate carboxyltransferase domain occupies 4 to 266 (IDIFDTTLRD…ETGIQLQEIK (263 aa)). Aspartate 13, histidine 201, histidine 203, and asparagine 237 together coordinate Mn(2+). Residues 392–511 (ELKMVQVQYG…IKESLRAHPV (120 aa)) are regulatory domain.

It belongs to the alpha-IPM synthase/homocitrate synthase family. LeuA type 1 subfamily. As to quaternary structure, homodimer. Requires Mn(2+) as cofactor.

It localises to the cytoplasm. It catalyses the reaction 3-methyl-2-oxobutanoate + acetyl-CoA + H2O = (2S)-2-isopropylmalate + CoA + H(+). It participates in amino-acid biosynthesis; L-leucine biosynthesis; L-leucine from 3-methyl-2-oxobutanoate: step 1/4. Functionally, catalyzes the condensation of the acetyl group of acetyl-CoA with 3-methyl-2-oxobutanoate (2-ketoisovalerate) to form 3-carboxy-3-hydroxy-4-methylpentanoate (2-isopropylmalate). The chain is 2-isopropylmalate synthase from Lysinibacillus sphaericus (strain C3-41).